An 815-amino-acid chain; its full sequence is Lon protease 1 (815 aa).

The Lon N-terminal domain occupies 14–211 (IAILPLLGTV…KLNEVLTREL (198 aa)). Residue 370-377 (GPPGVGKT) participates in ATP binding. One can recognise a Lon proteolytic domain in the interval 606–787 (TDRPGIVTGL…GQVIELALRA (182 aa)). Active-site residues include S693 and K736.

This sequence belongs to the peptidase S16 family. In terms of assembly, homohexamer. Organized in a ring with a central cavity.

It localises to the cytoplasm. It catalyses the reaction Hydrolysis of proteins in presence of ATP.. ATP-dependent serine protease that mediates the selective degradation of mutant and abnormal proteins as well as certain short-lived regulatory proteins. Required for cellular homeostasis and for survival from DNA damage and developmental changes induced by stress. Degrades polypeptides processively to yield small peptide fragments that are 5 to 10 amino acids long. Binds to DNA in a double-stranded, site-specific manner. The sequence is that of Lon protease 1 from Herpetosiphon aurantiacus (strain ATCC 23779 / DSM 785 / 114-95).